The following is a 505-amino-acid chain: Glycerol kinase (505 aa).

Thr14 is an ADP binding site. Positions 14, 15, and 16 each coordinate ATP. Thr14 contacts sn-glycerol 3-phosphate. An ADP-binding site is contributed by Arg18. Sn-glycerol 3-phosphate contacts are provided by Arg84, Glu85, Tyr136, and Asp246. Positions 84, 85, 136, 246, and 247 each coordinate glycerol. Thr268 and Gly311 together coordinate ADP. Residues Thr268, Gly311, Gln315, and Gly412 each coordinate ATP. Residues Gly412 and Asn416 each coordinate ADP.

Belongs to the FGGY kinase family.

The catalysed reaction is glycerol + ATP = sn-glycerol 3-phosphate + ADP + H(+). It participates in polyol metabolism; glycerol degradation via glycerol kinase pathway; sn-glycerol 3-phosphate from glycerol: step 1/1. Its activity is regulated as follows. Inhibited by fructose 1,6-bisphosphate (FBP). Its function is as follows. Key enzyme in the regulation of glycerol uptake and metabolism. Catalyzes the phosphorylation of glycerol to yield sn-glycerol 3-phosphate. In Vibrio cholerae serotype O1 (strain M66-2), this protein is Glycerol kinase.